We begin with the raw amino-acid sequence, 548 residues long: T-complex protein 1 subunit theta (548 aa).

Residues 527–548 (QATGGPKPRGPKAQDEDDDGMA) form a disordered region.

Belongs to the TCP-1 chaperonin family. As to quaternary structure, heterooligomeric complex.

It localises to the cytoplasm. Functionally, molecular chaperone; assists the folding of proteins upon ATP hydrolysis. Known to play a role, in vitro, in the folding of actin and tubulin. Required for correct subcellular localization of pgl-1. The sequence is that of T-complex protein 1 subunit theta (cct-8) from Caenorhabditis elegans.